A 63-amino-acid polypeptide reads, in one-letter code: Cysteine-rich venom protein 3 (63 aa).

The first 25 residues, 1–25 (MRKPITLILVVALALVLLATSEVSA), serve as a signal peptide directing secretion. Disulfide bonds link Cys-29–Cys-43, Cys-36–Cys-48, and Cys-42–Cys-58.

As to expression, expressed by the venom gland.

It localises to the secreted. In Pimpla hypochondriaca (Parasitoid wasp), this protein is Cysteine-rich venom protein 3.